The primary structure comprises 423 residues: Innexin eat-5 (423 aa).

4 helical membrane passes run 25-41 (YYYSTLIIMGMSLTITA), 102-122 (PFIMAIEAAFFYLPVIFWSML), 277-297 (IFLFLYIWFLLVFFVTLFDSI), and 341-361 (HSILLSEFCLHKFTPDIIILL).

It belongs to the pannexin family. As to quaternary structure, heterooligomer of eat-5 and another innexin. Expressed in pharyngeal muscles.

Its subcellular location is the cell membrane. It is found in the cell junction. The protein resides in the gap junction. Its function is as follows. Structural component of the gap junctions. Required for synchronized pharyngeal muscle contractions. This Caenorhabditis elegans protein is Innexin eat-5 (eat-5).